The sequence spans 385 residues: D-alanyl-D-alanine-carboxypeptidase/endopeptidase AmpH (385 aa).

The N-terminal stretch at Met1 to Ala21 is a signal peptide.

Belongs to the beta-lactamase family.

The protein resides in the cell inner membrane. Its activity is regulated as follows. Inhibited by cefmetazole. Functionally, hydrolyzes the cross-linked dimers tetrapentapeptide (D45) and tetratetrapeptide (D44). Removes the terminal D-alanine from muropeptides and disaccharide pentapeptide M5 with a C-terminal D-Ala-D-Ala dipeptide. Associated with recycling and remodeling of peptidoglycan (PG). The polypeptide is D-alanyl-D-alanine-carboxypeptidase/endopeptidase AmpH (ampH) (Escherichia coli O157:H7).